The chain runs to 1360 residues: DNA-directed RNA polymerase subunit beta (1360 aa).

This sequence belongs to the RNA polymerase beta chain family. In terms of assembly, the RNAP catalytic core consists of 2 alpha, 1 beta, 1 beta' and 1 omega subunit. When a sigma factor is associated with the core the holoenzyme is formed, which can initiate transcription.

The enzyme catalyses RNA(n) + a ribonucleoside 5'-triphosphate = RNA(n+1) + diphosphate. Its function is as follows. DNA-dependent RNA polymerase catalyzes the transcription of DNA into RNA using the four ribonucleoside triphosphates as substrates. This is DNA-directed RNA polymerase subunit beta from Desulfotalea psychrophila (strain LSv54 / DSM 12343).